Consider the following 208-residue polypeptide: Holliday junction branch migration complex subunit RuvA (208 aa).

The interval 1 to 63 (MIGMLTGRVE…QDSVTLYGFL (63 aa)) is domain I. A domain II region spans residues 64-142 (DRDSKRVFLQ…LNQSDDASAG (79 aa)). A flexible linker region spans residues 143–151 (NAPYQPTVD). A domain III region spans residues 151-208 (DAGVEQVVEGLVSLGWRQQDAQRAVNEACAENDVPMPLASDDAPRVLRLALARMDRGR).

It belongs to the RuvA family. In terms of assembly, homotetramer. Forms an RuvA(8)-RuvB(12)-Holliday junction (HJ) complex. HJ DNA is sandwiched between 2 RuvA tetramers; dsDNA enters through RuvA and exits via RuvB. An RuvB hexamer assembles on each DNA strand where it exits the tetramer. Each RuvB hexamer is contacted by two RuvA subunits (via domain III) on 2 adjacent RuvB subunits; this complex drives branch migration. In the full resolvosome a probable DNA-RuvA(4)-RuvB(12)-RuvC(2) complex forms which resolves the HJ.

The protein resides in the cytoplasm. The RuvA-RuvB-RuvC complex processes Holliday junction (HJ) DNA during genetic recombination and DNA repair, while the RuvA-RuvB complex plays an important role in the rescue of blocked DNA replication forks via replication fork reversal (RFR). RuvA specifically binds to HJ cruciform DNA, conferring on it an open structure. The RuvB hexamer acts as an ATP-dependent pump, pulling dsDNA into and through the RuvAB complex. HJ branch migration allows RuvC to scan DNA until it finds its consensus sequence, where it cleaves and resolves the cruciform DNA. This Bifidobacterium longum subsp. infantis (strain ATCC 15697 / DSM 20088 / JCM 1222 / NCTC 11817 / S12) protein is Holliday junction branch migration complex subunit RuvA.